The sequence spans 152 residues: Deoxyuridine 5'-triphosphate nucleotidohydrolase (152 aa).

Residues Arg-71 to Gly-73, Asn-84, Leu-88 to Asp-90, and Met-98 each bind substrate.

It belongs to the dUTPase family. It depends on Mg(2+) as a cofactor.

The catalysed reaction is dUTP + H2O = dUMP + diphosphate + H(+). Its pathway is pyrimidine metabolism; dUMP biosynthesis; dUMP from dCTP (dUTP route): step 2/2. This enzyme is involved in nucleotide metabolism: it produces dUMP, the immediate precursor of thymidine nucleotides and it decreases the intracellular concentration of dUTP so that uracil cannot be incorporated into DNA. The polypeptide is Deoxyuridine 5'-triphosphate nucleotidohydrolase (Shigella flexneri).